The primary structure comprises 316 residues: Diacylglycerol kinase (316 aa).

Residues M1 to Y132 form the DAGKc domain. Residues N10–G14, T41, G67–E73, and T94 contribute to the ATP site. Mg(2+) is bound by residues K213, D216, and Y218. E273 functions as the Proton acceptor in the catalytic mechanism.

This sequence belongs to the diacylglycerol/lipid kinase family. In terms of assembly, homodimer. Mg(2+) is required as a cofactor.

The catalysed reaction is a 1,2-diacyl-sn-glycerol + ATP = a 1,2-diacyl-sn-glycero-3-phosphate + ADP + H(+). Its function is as follows. Catalyzes the phosphorylation of diacylglycerol (DAG) into phosphatidic acid. Is a key enzyme involved in the production of lipoteichoic acid by reintroducing DAG formed from the breakdown of membrane phospholipids into the phosphatidylglycerol biosynthetic pathway. The chain is Diacylglycerol kinase (dagK) from Staphylococcus epidermidis (strain ATCC 35984 / DSM 28319 / BCRC 17069 / CCUG 31568 / BM 3577 / RP62A).